The sequence spans 432 residues: Amino-acid acetyltransferase (432 aa).

The N-acetyltransferase domain occupies 286–425 (ERVREAAIED…ASLYNYQRNS (140 aa)).

This sequence belongs to the acetyltransferase family. ArgA subfamily.

It localises to the cytoplasm. It catalyses the reaction L-glutamate + acetyl-CoA = N-acetyl-L-glutamate + CoA + H(+). It functions in the pathway amino-acid biosynthesis; L-arginine biosynthesis; N(2)-acetyl-L-ornithine from L-glutamate: step 1/4. This chain is Amino-acid acetyltransferase, found in Pseudomonas fluorescens (strain ATCC BAA-477 / NRRL B-23932 / Pf-5).